Here is a 348-residue protein sequence, read N- to C-terminus: Hereditary hemochromatosis protein (348 aa).

A signal peptide spans 1–22 (MGPRARPALLLLMLLQTAVLQG). An alpha-1 region spans residues 23–114 (RLLRSHSLHY…IMENHNHSKE (92 aa)). At 23–306 (RLLRSHSLHY…WEPSPSGTLV (284 aa)) the chain is on the extracellular side. Residues asparagine 110, asparagine 130, and asparagine 234 are each glycosylated (N-linked (GlcNAc...) asparagine). Residues 115-205 (SHTLQVILGC…ELGRGVLDQQ (91 aa)) are alpha-2. Disulfide bonds link cysteine 124/cysteine 187 and cysteine 225/cysteine 282. The interval 206–297 (VPPLVKVTHH…GLDQPLIVIW (92 aa)) is alpha-3. Positions 207–298 (PPLVKVTHHV…LDQPLIVIWE (92 aa)) constitute an Ig-like C1-type domain. The connecting peptide stretch occupies residues 298 to 306 (EPSPSGTLV). A helical transmembrane segment spans residues 307–330 (IGVISGIAVFVVILFIGILFIILR). Residues 331-348 (KRQGSRGAMGHYVLAERE) are Cytoplasmic-facing.

It belongs to the MHC class I family. Binds TFR through the extracellular domain in a pH-dependent manner. In terms of tissue distribution, expressed in all tissues tested except brain.

It is found in the cell membrane. Binds to transferrin receptor (TFR) and reduces its affinity for iron-loaded transferrin. This chain is Hereditary hemochromatosis protein (HFE), found in Homo sapiens (Human).